The primary structure comprises 269 residues: Phosphatidylglycerol--prolipoprotein diacylglyceryl transferase (269 aa).

A run of 7 helical transmembrane segments spans residues I17–W37, F59–Y79, W95–F115, L123–I143, A181–I201, G206–F226, and M242–L262. A 1,2-diacyl-sn-glycero-3-phospho-(1'-sn-glycerol) is bound at residue R142.

The protein belongs to the Lgt family.

The protein localises to the cell inner membrane. The catalysed reaction is L-cysteinyl-[prolipoprotein] + a 1,2-diacyl-sn-glycero-3-phospho-(1'-sn-glycerol) = an S-1,2-diacyl-sn-glyceryl-L-cysteinyl-[prolipoprotein] + sn-glycerol 1-phosphate + H(+). It functions in the pathway protein modification; lipoprotein biosynthesis (diacylglyceryl transfer). Functionally, catalyzes the transfer of the diacylglyceryl group from phosphatidylglycerol to the sulfhydryl group of the N-terminal cysteine of a prolipoprotein, the first step in the formation of mature lipoproteins. The protein is Phosphatidylglycerol--prolipoprotein diacylglyceryl transferase of Paramagnetospirillum magneticum (strain ATCC 700264 / AMB-1) (Magnetospirillum magneticum).